The following is a 112-amino-acid chain: UPF0122 protein CPF_1968 (112 aa).

Belongs to the UPF0122 family.

Functionally, might take part in the signal recognition particle (SRP) pathway. This is inferred from the conservation of its genetic proximity to ftsY/ffh. May be a regulatory protein. This chain is UPF0122 protein CPF_1968, found in Clostridium perfringens (strain ATCC 13124 / DSM 756 / JCM 1290 / NCIMB 6125 / NCTC 8237 / Type A).